The following is a 1021-amino-acid chain: MYEGKHIHFSEVDNKPLCSYSPKLCKQRRLNGYAFCIRHVLEDKTAPFKQCEYVAKYNSQRCTNPIPKSEDRRYCNSHLQVLGFIPKKERKKKTDPVDEVKARHQMDAMAFSLTVPTLALKMPNGLDSMSLSPPGARVPLHYLDTELEDPFAFNEEDDDLKKGVTVRKKLQSKLAQNRQRQRETEILKVRQEHFSTPPTPPQQHTHLSPLSTSLKPPAPPQGSVCKSPQPQNTSLPMQGVAPTTHSIAQIRQASHKRPLPLLPSSRAPISDAPRTDRILMKAAAFSPHLSCISRLQRLVKLCTQKRQLDADLFPHLGLDWSEESGEELEDADQASPYQVAWSIRETLRHERHTSDDDDMESRSSRVTQLCTYFQQKYKHLCRLERAESRQKKCRHTFRKALLQAASKEPECTGQLIQELRRAACSRASLRQTKLKEVEPAACSGTVKGEQCTKQALPFTRHCFQHILLNRSQQLFSSCTAKFADGQQCSVPVFDITHQTPLCEEHAKKMDNFLRGDNSRKVQHQQQRKPRKKTKPPALTKKHKKKRRRGPRRPQKPIPPAVPQGNLSMPTSVSLPVEASQMRSPSTPELSADELPDDIANEITDIPHDLELNQEDFADVLPRLPDDLQDFDFFEGKNGDLLPTTEEAEELERALQAVTSLECLSTIGVLSQSDGVPVQGLSDRGMGVFSTGTDASGIQSLSREVNTDLGELLNGRIVHDSFSSLELDENLLHSAPLSSPPTALAGQIQGQFSAPASAGLTSATLLSQSALGERAFPGQFHGLHDGSHASQRPHPAQLLSKADDLITSRQQYSSDHSHSSPHGSHYDSEHVPSPYSDHITSPHTSYSGDNMAATFSAEMPIMAQHLLPTQLEVPLGGVVNPRTHWGNLPVNLGDPSAFSNLLGADGHLLSTSLSTPPTTSNSETTQPAFATVTPSSSSVLPGLPQTSFSGMGPSAELMASTSPKQQLPQFSAAFGHQLSSHSGIPKDLQPSHSSIAPPTGFTATGATATSTNNASPPFPSPN.

Lysine 87 participates in a covalent cross-link: Glycyl lysine isopeptide (Lys-Gly) (interchain with G-Cter in SUMO2). Position 132 is a phosphoserine (serine 132). 5 disordered regions span residues 194–239 (FSTP…PMQG), 514–570 (RGDN…SMPT), 808–844 (RQQY…PHTS), 911–940 (SLST…SVLP), and 976–1021 (QLSS…PSPN). Over residues 224-239 (VCKSPQPQNTSLPMQG) the composition is skewed to polar residues. Positions 520–554 (KVQHQQQRKPRKKTKPPALTKKHKKKRRRGPRRPQ) are enriched in basic residues. Residues 911–926 (SLSTPPTTSNSETTQP) show a composition bias toward low complexity. The segment covering 931–940 (VTPSSSSVLP) has biased composition (polar residues). Residues 995-1014 (APPTGFTATGATATSTNNAS) show a composition bias toward low complexity.

This sequence belongs to the INO80D family. In terms of assembly, component of the chromatin remodeling INO80 complex; specifically part of a complex module associated with the N-terminus of INO80.

The protein localises to the nucleus. Functionally, putative regulatory component of the chromatin remodeling INO80 complex which is involved in transcriptional regulation, DNA replication and probably DNA repair. The polypeptide is INO80 complex subunit D (Mus musculus (Mouse)).